The primary structure comprises 335 residues: Homeobox protein unc-39 (335 aa).

Disordered stretches follow at residues 27 to 56 (FTSSSNSNTSNSSTSPSHISDQFSSSGGPP) and 269 to 294 (RRQRDKSNNSAKCSPPSSSSSTNGGS). Residues 28–41 (TSSSNSNTSNSSTS) are compositionally biased toward low complexity. Over residues 42–53 (PSHISDQFSSSG) the composition is skewed to polar residues. The segment at residues 225 to 277 (KDSSRKFLKQFFRNVSEYPTQEQKREISRATGLKIVQISNWFKNRRQRDKSNN) is a DNA-binding region (homeobox). Over residues 276 to 294 (NNSAKCSPPSSSSSTNGGS) the composition is skewed to low complexity.

The protein belongs to the SIX/Sine oculis homeobox family.

The protein resides in the nucleus. Probable transcription factor required for differentiation and migration of neuronal cells, such as RID and CAN neurons. Specifically, plays a role in the terminal differentiation of RID peptidergic neurons. Also required for CAN neuron axon guidance. The polypeptide is Homeobox protein unc-39 (Caenorhabditis elegans).